A 166-amino-acid polypeptide reads, in one-letter code: Large ribosomal subunit protein mL41 (166 aa).

A mitochondrion-targeting transit peptide spans 1–26 (MNNCIKVVPIALRCQQRTISTSSVLE). Residues 136 to 166 (KDGSAKEPSVNEQLTPEEALQRARKTGSDIF) form a disordered region.

The protein belongs to the mitochondrion-specific ribosomal protein mL41 family. As to quaternary structure, component of the mitochondrial ribosome large subunit (39S) which comprises a 16S rRNA and about 50 distinct proteins.

The protein localises to the mitochondrion. This is Large ribosomal subunit protein mL41 (mRpL41) from Drosophila melanogaster (Fruit fly).